The chain runs to 245 residues: uncharacterized protein (245 aa).

The stretch at Gln-33–Thr-176 forms a coiled coil.

This is an uncharacterized protein from Mycobacterium tuberculosis (strain CDC 1551 / Oshkosh).